We begin with the raw amino-acid sequence, 231 residues long: Ribose-5-phosphate isomerase A (231 aa).

Residues 28 to 31 (TGST), 83 to 86 (DGAD), and 96 to 99 (KGGG) each bind substrate. Glutamate 105 acts as the Proton acceptor in catalysis. Lysine 123 contacts substrate.

This sequence belongs to the ribose 5-phosphate isomerase family. As to quaternary structure, homodimer.

The catalysed reaction is aldehydo-D-ribose 5-phosphate = D-ribulose 5-phosphate. Its pathway is carbohydrate degradation; pentose phosphate pathway; D-ribose 5-phosphate from D-ribulose 5-phosphate (non-oxidative stage): step 1/1. Functionally, catalyzes the reversible conversion of ribose-5-phosphate to ribulose 5-phosphate. This Sinorhizobium medicae (strain WSM419) (Ensifer medicae) protein is Ribose-5-phosphate isomerase A.